The chain runs to 146 residues: Ferredoxin-type protein FwdE (146 aa).

2 consecutive 4Fe-4S ferredoxin-type domains span residues 90-115 and 116-145; these read IKLFWDENSCIACGSCLGCAALTLDN and FTVGIDEDTCHLCASCIFRCPTNSLKFIKE. The [4Fe-4S] cluster site is built by C125, C128, C131, and C135.

The cofactor is [4Fe-4S] cluster.

This is Ferredoxin-type protein FwdE (fwdE) from Methanocaldococcus jannaschii (strain ATCC 43067 / DSM 2661 / JAL-1 / JCM 10045 / NBRC 100440) (Methanococcus jannaschii).